We begin with the raw amino-acid sequence, 506 residues long: WD repeat-containing protein 55 homolog (506 aa).

Basic and acidic residues predominate over residues 1–11; it reads MHRHDCFKTPA. Disordered regions lie at residues 1–20, 33–87, and 100–132; these read MHRHDCFKTPADEDELDDID, QEVL…SDDS, and AKRRKEQNAMDGAEPSGSGPSGSGDYSHLDEDD. The span at 33–48 shows a compositional bias: acidic residues; that stretch reads QEVLNESESDDDEYDL. Residues 61-74 show a composition bias toward low complexity; the sequence is GNISSNESISSDGS. The segment covering 78–87 has biased composition (acidic residues); the sequence is NAEDTDSDDS. 6 WD repeats span residues 156 to 195, 200 to 239, 243 to 281, 284 to 323, 326 to 365, and 410 to 449; these read RLEDFITDICFHPERDIIALATIIGDVHLYEYGNEENKLL, VHAKACRDVEFTEDGRSLITCSKDKCVMVTDMETEKLKKL, AHDDAINKLHVLDERLFATGDDAGTVKLWDFRTKDAIFE, EVEDQITQMLTNEQNKLLLATSADGYLTTFNIGARKLYVQ, PYEEELNCMGIYRGSSKLVVGTSKGRLYTYNWGYFGYHCD, and QHNMPIESLDINSSGELLASSSHNNDVRFWNVKYFEDFGD. The segment at 480 to 506 is disordered; sequence DMTKEQDDDDNDDGGNNTTAAGSNNVT. Residues 493–506 are compositionally biased toward low complexity; the sequence is GGNNTTAAGSNNVT.

The protein belongs to the WD repeat WDR55 family.

This is WD repeat-containing protein 55 homolog from Drosophila mojavensis (Fruit fly).